A 687-amino-acid polypeptide reads, in one-letter code: MASHTLRPHRSPSPSPEPPVNLANPAKLTRQSLGPPTSGNSKGFGSLGLGPGLASPSSPSQPRHVSSSVAMGMGNRDSLSPRPSGVGSGRAVSATTGPRPSSEFIPTREAKTPEAEQIDQWFKHLANWEATLEEMAAASTDQNFTEELGAIEQWFRVLSEAERTAALYSLLQYSTPVQIRFFISVLHHMSQSDPMSALLSPSLSGSNAFQTQVESKLSNMNLKSPSAGGGAGFAGSSGNGHYLAPDDAAAKAAKARQNRISAPGTLQPHDRWQGQLDQVVERGTSPGLESNMSGRSRSKSPTPEPRPKSTDFSGKPRESLRRESAAFPRSPRVSAGSPGIGLGIGHESPMASPFGNNASWASMVNTPLVQNFNDGKLVAPASVADLSQALNMATLQLNNPGYLPLDDARKYRRPTGGLASGQTSRNVSGQYNDDGEIVNPHTTQPGTPSGLLPNQFGGGRSPLVDQFGLGGLGIGADSTTLANLGLNYNLAGLGGVNPGLNGLTAAQAQAAQMLAMQQQLQNSQYSPFNASAPSLQPGLNPSRRGAGRGQSSHLNQHYNQHQQQHQPGRRSPNPLKSHSPAPGQQTGGGGAGGGAGVAGPEDVDVKVLEDVPNWLRVLRLHKYTPNFEKSNWNDMVLMTDQDLQDNGISAQGARTKFLKVFYNVRTKMDIAHPPGQEEYAPGPKESK.

The span at 1–10 (MASHTLRPHR) shows a compositional bias: basic residues. Disordered regions lie at residues 1 to 115 (MASH…TPEA), 248 to 341 (AAAK…PGIG), and 526 to 598 (SPFN…AGVA). The span at 29 to 41 (TRQSLGPPTSGNS) shows a compositional bias: polar residues. Residues 52 to 68 (GLASPSSPSQPRHVSSS) show a composition bias toward low complexity. Over residues 287-301 (GLESNMSGRSRSKSP) the composition is skewed to polar residues. The span at 305–324 (PRPKSTDFSGKPRESLRRES) shows a compositional bias: basic and acidic residues. A compositionally biased stretch (polar residues) spans 526–539 (SPFNASAPSLQPGL). Positions 550–566 (QSSHLNQHYNQHQQQHQ) are enriched in low complexity. The segment covering 585–597 (QTGGGGAGGGAGV) has biased composition (gly residues). In terms of domain architecture, SAM spans 606–667 (KVLEDVPNWL…LKVFYNVRTK (62 aa)).

This sequence belongs to the VTS1 family. In terms of assembly, monomer. Binds to RNA.

Its subcellular location is the cytoplasm. It is found in the cytosol. The protein resides in the P-body. RNA-binding protein involved in post-transcriptional regulation through transcript degradation. The protein is RNA-binding protein VTS1 of Cryptococcus neoformans var. grubii serotype A (strain H99 / ATCC 208821 / CBS 10515 / FGSC 9487) (Filobasidiella neoformans var. grubii).